The primary structure comprises 299 residues: Ribosomal protein L11 methyltransferase (299 aa).

4 residues coordinate S-adenosyl-L-methionine: Thr144, Gly165, Asp187, and Asn229.

Belongs to the methyltransferase superfamily. PrmA family.

It is found in the cytoplasm. The enzyme catalyses L-lysyl-[protein] + 3 S-adenosyl-L-methionine = N(6),N(6),N(6)-trimethyl-L-lysyl-[protein] + 3 S-adenosyl-L-homocysteine + 3 H(+). Functionally, methylates ribosomal protein L11. This is Ribosomal protein L11 methyltransferase from Teredinibacter turnerae (strain ATCC 39867 / T7901).